Reading from the N-terminus, the 240-residue chain is NDR1/HIN1-like protein 2 (240 aa).

Residues 57 to 77 (NILIAVAVILGVAALILWLIF) form a helical membrane-spanning segment. N-linked (GlcNAc...) asparagine glycosylation is found at N109, N141, N151, and N223.

Expressed at low levels in roots, rosette leaves, cauline leaves, stems, flowers and siliques.

The protein resides in the cell membrane. May play a role in plant immunity. This is NDR1/HIN1-like protein 2 from Arabidopsis thaliana (Mouse-ear cress).